Consider the following 438-residue polypeptide: ATP-dependent RNA helicase sub2 (438 aa).

The segment covering 23 to 36 (TTAAPAANGAPAKT) has biased composition (low complexity). A disordered region spans residues 23–42 (TTAAPAANGAPAKTGDLTVT). The Q motif motif lies at 58–86 (TGFRDFLLKGELLRAITDCGFEHPSEVCI). The Helicase ATP-binding domain occupies 86–261 (IPTAILNVDV…KKFMRNPLEV (176 aa)). 99 to 106 (AKSGLGKT) is an ATP binding site. Positions 208–211 (DECD) match the DEAD box motif. A Helicase C-terminal domain is found at 289–434 (KLNDLLDNLE…EYPEGGVDSS (146 aa)).

This sequence belongs to the DEAD box helicase family. DECD subfamily.

It is found in the nucleus. It catalyses the reaction ATP + H2O = ADP + phosphate + H(+). Its function is as follows. ATP-binding RNA helicase involved in transcription elongation and required for the export of mRNA out of the nucleus. SUB2 also plays a role in pre-mRNA splicing and spliceosome assembly. May be involved in rDNA and telomeric silencing, and maintenance of genome integrity. In Aspergillus terreus (strain NIH 2624 / FGSC A1156), this protein is ATP-dependent RNA helicase sub2 (sub2).